The sequence spans 428 residues: Histidine--tRNA ligase (428 aa).

The protein belongs to the class-II aminoacyl-tRNA synthetase family. As to quaternary structure, homodimer.

The protein resides in the cytoplasm. It carries out the reaction tRNA(His) + L-histidine + ATP = L-histidyl-tRNA(His) + AMP + diphosphate + H(+). The protein is Histidine--tRNA ligase of Lactobacillus delbrueckii subsp. bulgaricus (strain ATCC BAA-365 / Lb-18).